The sequence spans 104 residues: Putative protein 22K (104 aa).

Residues 35–104 (YKQLEKELGE…KAPAAKAPSK (70 aa)) form a disordered region. Acidic residues predominate over residues 60-78 (PLSEGELEEISEEEEEEGE). A compositionally biased stretch (low complexity) spans 94-104 (SKAPAAKAPSK).

The sequence is that of Putative protein 22K from Snake adenovirus serotype 1 (SnAdV-1).